The sequence spans 219 residues: 2-hydroxy-3-keto-5-methylthiopentenyl-1-phosphate phosphatase (219 aa).

The protein belongs to the HAD-like hydrolase superfamily. MtnX family.

The catalysed reaction is 2-hydroxy-5-methylsulfanyl-3-oxopent-1-enyl phosphate + H2O = 1,2-dihydroxy-5-(methylsulfanyl)pent-1-en-3-one + phosphate. The protein operates within amino-acid biosynthesis; L-methionine biosynthesis via salvage pathway; L-methionine from S-methyl-5-thio-alpha-D-ribose 1-phosphate: step 4/6. Its function is as follows. Dephosphorylates 2-hydroxy-3-keto-5-methylthiopentenyl-1-phosphate (HK-MTPenyl-1-P) yielding 1,2-dihydroxy-3-keto-5-methylthiopentene (DHK-MTPene). The protein is 2-hydroxy-3-keto-5-methylthiopentenyl-1-phosphate phosphatase of Bacillus cereus (strain ATCC 10987 / NRS 248).